Reading from the N-terminus, the 336-residue chain is 7,8-didemethyl-8-hydroxy-5-deazariboflavin synthase (336 aa).

One can recognise a Radical SAM core domain in the interval 18–249 (ITYSPAYTLV…TSIAIQVPPN (232 aa)). The [4Fe-4S] cluster site is built by Cys-32, Cys-36, and Cys-39.

This sequence belongs to the radical SAM superfamily. CofG family. As to quaternary structure, consists of two subunits, CofG and CofH. Requires [4Fe-4S] cluster as cofactor.

The catalysed reaction is 5-amino-5-(4-hydroxybenzyl)-6-(D-ribitylimino)-5,6-dihydrouracil + S-adenosyl-L-methionine = 7,8-didemethyl-8-hydroxy-5-deazariboflavin + 5'-deoxyadenosine + L-methionine + NH4(+) + H(+). It functions in the pathway cofactor biosynthesis; coenzyme F0 biosynthesis. Functionally, catalyzes the radical-mediated synthesis of 7,8-didemethyl-8-hydroxy-5-deazariboflavin from 5-amino-5-(4-hydroxybenzyl)-6-(D-ribitylimino)-5,6-dihydrouracil. This is 7,8-didemethyl-8-hydroxy-5-deazariboflavin synthase from Synechococcus elongatus (strain ATCC 33912 / PCC 7942 / FACHB-805) (Anacystis nidulans R2).